The primary structure comprises 356 residues: MAEPLLSEHQHQPQTSNCTGAAVVHEEQNSERPPSAEERVPKEDSRWQSRASLQSGSRPGQEGDGGLKHQLPPLQTNACPELSCLEKGEKGQNGEDLSTGGASPSAEGEPMSESLVQPGHDSEATKLEAPVAGVEEPWGQQQRQLGKKKHRRRPSKKKRHWKPYYKLTWEEKKKFDEKQSLRASRVRAEMFAKGQPVAPYNTTQFLMDDHDQEEPDLKTGLYPKRAAAKSDDTSDEDFVEEAGEEDGGSDGMGGDGSEFLQRDFSETYERYHAESLQNMSKQELIKEYLELEKCLSRKEDENNRLRLESKRLGGVDARVRELELELDRLRAENRQLLTENELHRQQERAPPSKFGD.

Basic and acidic residues-rich tracts occupy residues 1–11 (MAEPLLSEHQH) and 24–47 (VHEE…DSRW). A disordered region spans residues 1–160 (MAEPLLSEHQ…RRRPSKKKRH (160 aa)). Residues 48–58 (QSRASLQSGSR) are compositionally biased toward polar residues. Residues 84-93 (CLEKGEKGQN) show a composition bias toward basic and acidic residues. 2 positions are modified to phosphoserine: S98 and S103. Basic residues predominate over residues 145 to 160 (LGKKKHRRRPSKKKRH). Residues 147-174 (KKKHRRRPSKKKRHWKPYYKLTWEEKKK) are basic region; mediates nuclear localization and interaction with 7SK snRNA and NR3C1. The interval 199 to 202 (PYNT) is interaction with P-TEFb. The autoinhibitory acidic region; in absence of 7SK snRNA interacts with the basic region preventing interaction with P-TEFb and modulating subcellular localization stretch occupies residues 207–247 (MDDHDQEEPDLKTGLYPKRAAAKSDDTSDEDFVEEAGEEDG). The segment at 209–259 (DHDQEEPDLKTGLYPKRAAAKSDDTSDEDFVEEAGEEDGGSDGMGGDGSEF) is disordered. S230 bears the Phosphoserine mark. T233 is subject to Phosphothreonine. The span at 233–248 (TSDEDFVEEAGEEDGG) shows a compositional bias: acidic residues. Phosphoserine is present on residues S234, S249, and S257. Residues 280–346 (SKQELIKEYL…LTENELHRQQ (67 aa)) are a coiled coil. A mediates interaction with CCNT1 region spans residues 283–311 (ELIKEYLELEKCLSRKEDENNRLRLESKR). The interval 307 to 352 (LESKRLGGVDARVRELELELDRLRAENRQLLTENELHRQQERAPPS) is required for inhibition of ESR1-dependent transcription. Residues 337 to 356 (LTENELHRQQERAPPSKFGD) are disordered.

Belongs to the HEXIM family. As to quaternary structure, homooligomer and heterooligomer with HEXIM2; probably dimeric. Core component of the 7SK RNP complex, at least composed of 7SK RNA, LARP7, MEPCE, HEXIM1 (or HEXIM2) and P-TEFb (composed of CDK9 and CCNT1/cyclin-T1). Interacts with the N-CoR complex through NCOR1. Interacts with ESR1 and NR3C1. May interact with NF-kappa-B through RELA. Interacts with CCNT2; mediates formation of a tripartite complex with KPNA2. Part of the HDP-RNP complex composed of at least HEXIM1, PRKDC, XRCC5, XRCC6, paraspeckle proteins (SFPQ, NONO, PSPC1, RBM14, and MATR3) and NEAT1 non-coding RNA.

The protein localises to the nucleus. Its subcellular location is the cytoplasm. Its function is as follows. Transcriptional regulator which functions as a general RNA polymerase II transcription inhibitor. Core component of the 7SK RNP complex: in cooperation with 7SK snRNA sequesters P-TEFb in a large inactive 7SK snRNP complex preventing RNA polymerase II phosphorylation and subsequent transcriptional elongation. May also regulate NF-kappa-B, ESR1, NR3C1 and CIITA-dependent transcriptional activity. Plays a role in the regulation of DNA virus-mediated innate immune response by assembling into the HDP-RNP complex, a complex that serves as a platform for IRF3 phosphorylation and subsequent innate immune response activation through the cGAS-STING pathway. This is Protein HEXIM1 (Hexim1) from Rattus norvegicus (Rat).